The chain runs to 513 residues: Sterol 14-alpha demethylase (513 aa).

Residues 8 to 28 (AYALLAFVAIMALNVTYQFLF) form a helical membrane-spanning segment. N-linked (GlcNAc...) asparagine glycans are attached at residues N32 and N332. C453 lines the heme pocket.

This sequence belongs to the cytochrome P450 family. Heme serves as cofactor.

The protein localises to the endoplasmic reticulum membrane. The enzyme catalyses a 14alpha-methyl steroid + 3 reduced [NADPH--hemoprotein reductase] + 3 O2 = a Delta(14) steroid + formate + 3 oxidized [NADPH--hemoprotein reductase] + 4 H2O + 4 H(+). It carries out the reaction a 14alpha-methyl steroid + reduced [NADPH--hemoprotein reductase] + O2 = a 14alpha-hydroxymethyl steroid + oxidized [NADPH--hemoprotein reductase] + H2O + H(+). It catalyses the reaction a 14alpha-hydroxymethyl steroid + reduced [NADPH--hemoprotein reductase] + O2 = a 14alpha-formyl steroid + oxidized [NADPH--hemoprotein reductase] + 2 H2O + H(+). The catalysed reaction is a 14alpha-formyl steroid + reduced [NADPH--hemoprotein reductase] + O2 = a Delta(14) steroid + formate + oxidized [NADPH--hemoprotein reductase] + H2O + 2 H(+). The enzyme catalyses lanosterol + 3 reduced [NADPH--hemoprotein reductase] + 3 O2 = 4,4-dimethyl-5alpha-cholesta-8,14,24-trien-3beta-ol + formate + 3 oxidized [NADPH--hemoprotein reductase] + 4 H2O + 4 H(+). It carries out the reaction lanosterol + reduced [NADPH--hemoprotein reductase] + O2 = 32-hydroxylanosterol + oxidized [NADPH--hemoprotein reductase] + H2O + H(+). It catalyses the reaction 32-hydroxylanosterol + reduced [NADPH--hemoprotein reductase] + O2 = 32-oxolanosterol + oxidized [NADPH--hemoprotein reductase] + 2 H2O + H(+). The catalysed reaction is 32-oxolanosterol + reduced [NADPH--hemoprotein reductase] + O2 = 4,4-dimethyl-5alpha-cholesta-8,14,24-trien-3beta-ol + formate + oxidized [NADPH--hemoprotein reductase] + H2O + 2 H(+). The enzyme catalyses eburicol + 3 reduced [NADPH--hemoprotein reductase] + 3 O2 = 14-demethyleburicol + formate + 3 oxidized [NADPH--hemoprotein reductase] + 4 H2O + 4 H(+). It carries out the reaction eburicol + reduced [NADPH--hemoprotein reductase] + O2 = 32-hydroxyeburicol + oxidized [NADPH--hemoprotein reductase] + H2O + H(+). It catalyses the reaction 32-hydroxyeburicol + reduced [NADPH--hemoprotein reductase] + O2 = 32-oxoeburicol + oxidized [NADPH--hemoprotein reductase] + 2 H2O + H(+). The catalysed reaction is 32-oxoeburicol + reduced [NADPH--hemoprotein reductase] + O2 = 14-demethyleburicol + formate + oxidized [NADPH--hemoprotein reductase] + H2O + 2 H(+). Its pathway is steroid biosynthesis; sterol biosynthesis. Its function is as follows. Sterol 14alpha-demethylase, encoded by cyp51A, cyp51B and cyp51C, that plays a critical role in the third module of ergosterol biosynthesis pathway, being ergosterol the major sterol component in fungal membranes that participates in a variety of functions. The third module or late pathway involves the ergosterol synthesis itself through consecutive reactions that mainly occur in the endoplasmic reticulum (ER) membrane. In filamentous fungi, during the initial step of this module, lanosterol (lanosta-8,24-dien-3beta-ol) can be metabolized to eburicol. Sterol 14alpha-demethylase catalyzes the three-step oxidative removal of the 14alpha-methyl group (C-32) of both these sterols in the form of formate, and converts eburicol and lanosterol to 14-demethyleburicol (4,4,24-trimethylergosta-8,14,24(28)-trienol) and 4,4-dimethyl-5alpha-cholesta-8,14,24-trien-3beta-ol, respectively, which are further metabolized by other enzymes in the pathway to ergosterol. Can also use substrates not intrinsic to fungi, such as 24,25-dihydrolanosterol (DHL), producing 4,4'-dimethyl-8,14-cholestadien-3-beta-ol, but at lower rates than the endogenous substrates. As a target of azole drugs, plays a crucial role in azole drug susceptibility. This is Sterol 14-alpha demethylase from Aspergillus flavus (strain ATCC 200026 / FGSC A1120 / IAM 13836 / NRRL 3357 / JCM 12722 / SRRC 167).